The following is a 283-amino-acid chain: Bifunctional protein FolD (283 aa).

NADP(+)-binding positions include 165-167 (GRS), serine 190, and isoleucine 231.

The protein belongs to the tetrahydrofolate dehydrogenase/cyclohydrolase family. As to quaternary structure, homodimer.

The catalysed reaction is (6R)-5,10-methylene-5,6,7,8-tetrahydrofolate + NADP(+) = (6R)-5,10-methenyltetrahydrofolate + NADPH. The enzyme catalyses (6R)-5,10-methenyltetrahydrofolate + H2O = (6R)-10-formyltetrahydrofolate + H(+). It functions in the pathway one-carbon metabolism; tetrahydrofolate interconversion. Its function is as follows. Catalyzes the oxidation of 5,10-methylenetetrahydrofolate to 5,10-methenyltetrahydrofolate and then the hydrolysis of 5,10-methenyltetrahydrofolate to 10-formyltetrahydrofolate. In Herminiimonas arsenicoxydans, this protein is Bifunctional protein FolD.